We begin with the raw amino-acid sequence, 311 residues long: 4-hydroxy-tetrahydrodipicolinate synthase (311 aa).

T51 contacts pyruvate. Catalysis depends on Y140, which acts as the Proton donor/acceptor. K168 (schiff-base intermediate with substrate) is an active-site residue. I209 contributes to the pyruvate binding site.

Belongs to the DapA family. In terms of assembly, homotetramer; dimer of dimers.

Its subcellular location is the cytoplasm. It carries out the reaction L-aspartate 4-semialdehyde + pyruvate = (2S,4S)-4-hydroxy-2,3,4,5-tetrahydrodipicolinate + H2O + H(+). It functions in the pathway amino-acid biosynthesis; L-lysine biosynthesis via DAP pathway; (S)-tetrahydrodipicolinate from L-aspartate: step 3/4. Its function is as follows. Catalyzes the condensation of (S)-aspartate-beta-semialdehyde [(S)-ASA] and pyruvate to 4-hydroxy-tetrahydrodipicolinate (HTPA). This is 4-hydroxy-tetrahydrodipicolinate synthase from Streptococcus suis (strain 98HAH33).